The primary structure comprises 199 residues: ATP-dependent Clp protease proteolytic subunit (199 aa).

The active-site Nucleophile is serine 97. The active site involves histidine 122.

This sequence belongs to the peptidase S14 family. In terms of assembly, fourteen ClpP subunits assemble into 2 heptameric rings which stack back to back to give a disk-like structure with a central cavity, resembling the structure of eukaryotic proteasomes.

It localises to the cytoplasm. It carries out the reaction Hydrolysis of proteins to small peptides in the presence of ATP and magnesium. alpha-casein is the usual test substrate. In the absence of ATP, only oligopeptides shorter than five residues are hydrolyzed (such as succinyl-Leu-Tyr-|-NHMec, and Leu-Tyr-Leu-|-Tyr-Trp, in which cleavage of the -Tyr-|-Leu- and -Tyr-|-Trp bonds also occurs).. Cleaves peptides in various proteins in a process that requires ATP hydrolysis. Has a chymotrypsin-like activity. Plays a major role in the degradation of misfolded proteins. This is ATP-dependent Clp protease proteolytic subunit from Geotalea daltonii (strain DSM 22248 / JCM 15807 / FRC-32) (Geobacter daltonii).